A 370-amino-acid chain; its full sequence is Cobalt-precorrin-5B C(1)-methyltransferase (370 aa).

This sequence belongs to the CbiD family.

The catalysed reaction is Co-precorrin-5B + S-adenosyl-L-methionine = Co-precorrin-6A + S-adenosyl-L-homocysteine. It functions in the pathway cofactor biosynthesis; adenosylcobalamin biosynthesis; cob(II)yrinate a,c-diamide from sirohydrochlorin (anaerobic route): step 6/10. Functionally, catalyzes the methylation of C-1 in cobalt-precorrin-5B to form cobalt-precorrin-6A. This is Cobalt-precorrin-5B C(1)-methyltransferase from Trichormus variabilis (strain ATCC 29413 / PCC 7937) (Anabaena variabilis).